The following is a 1037-amino-acid chain: Tyrosine-protein kinase-like otk (1037 aa).

A signal peptide spans 1–23 (MDMDVMMISMCILASTFMAPGWA). 5 consecutive Ig-like C2-type domains span residues 24-109 (STSG…REAS), 110-199 (PPAK…RVMS), 251-365 (PEDL…APLN), 368-464 (PGLL…VSIN), and 469-559 (PKFS…VQLV). Residues 24 to 582 (STSGFLRVPQ…GGDGFLVTRA (559 aa)) are Extracellular-facing. Cystine bridges form between C47-C96, C138-C188, C276-C354, C399-C448, and C491-C543. 6 N-linked (GlcNAc...) asparagine glycosylation sites follow: N336, N418, N430, N445, N513, and N525. The helical transmembrane segment at 583–603 (VLITMTVALAYIVLVVGLMLW) threads the bilayer. Residues 604 to 1037 (CRYRRQARKA…SKAMQSVAEK (434 aa)) lie on the Cytoplasmic side of the membrane. Disordered stretches follow at residues 623-683 (AGGD…KSVY) and 720-777 (SAQS…KEEE). A compositionally biased stretch (polar residues) spans 658–676 (KSNGDAQKSDDTACSQQSR). Phosphoserine is present on S681. The Protein kinase; inactive domain maps to 693-1031 (LSELLQIGRG…QLGSALSKAM (339 aa)). The segment covering 723 to 734 (SDKDADTEKQHS) has biased composition (basic and acidic residues). The segment covering 739–749 (GSGGSGSGSGS) has biased composition (gly residues). The span at 768–777 (DDIEEIKEEE) shows a compositional bias: acidic residues.

It belongs to the protein kinase superfamily. Tyr protein kinase family. Insulin receptor subfamily. Interacts with plexA; component of a receptor complex that mediates the repulsive signaling in response to Semaphorin ligands.

It localises to the cell membrane. Functionally, acts as a calcium-dependent, homophilic cell adhesion molecule that regulates neural recognition during the development of the nervous system. Component of the repulsive Plexin signaling response to regulate motor axon guidance at the embryonic stage. Also component of a receptor complex that is required in the adult visual system to innervate the lamina layer; specific targeting of R1-R6 axons. The protein is Tyrosine-protein kinase-like otk of Drosophila pseudoobscura pseudoobscura (Fruit fly).